A 245-amino-acid polypeptide reads, in one-letter code: Phycocyanobilin:ferredoxin oxidoreductase (245 aa).

It belongs to the HY2 family.

It catalyses the reaction (2R,3Z)-phycocyanobilin + 4 oxidized [2Fe-2S]-[ferredoxin] = biliverdin IXalpha + 4 reduced [2Fe-2S]-[ferredoxin] + 4 H(+). Functionally, catalyzes the four-electron reduction of biliverdin IX-alpha (2-electron reduction at both the A and D rings); the reaction proceeds via an isolatable 2-electron intermediate, 181,182-dihydrobiliverdin. Upon overexpression in E.coli with PCB:ferredoxin oxidoreductase, CpeS and either CpcB or PecB permits synthesis of phycocyanin-coupled CpcB or PecB. This is Phycocyanobilin:ferredoxin oxidoreductase (pcyA) from Nostoc sp. (strain PCC 7120 / SAG 25.82 / UTEX 2576).